The primary structure comprises 217 residues: METIWIYQFRLIVIGDSTVGKSCLLHRFTQGRFPGLRSPACDPTVGVDFFSRLLEIEPGKRIKLQLWDTAGQERFRSITRSYYRNSVGGFLVFDITNRRSFEHVKDWLEEAKMYVQPFRIVFLLVGHKCDLASQRQVTREEAEKLSADCGMKYIETSAKDATNVEESFTILTRDIYELIKKGEICIQDGWEGVKSGFVPNTVHSSEEAVKPRKECFC.

GTP is bound by residues Ser17, Gly20, Lys21, Ser22, Cys23, and Thr44. Ser22 provides a ligand contact to Mg(2+). A switch-I region spans residues 39 to 47 (PACDPTVGV). Positions 44 and 68 each coordinate Mg(2+). 6 residues coordinate GTP: Gly71, His127, Lys128, Asp130, Ala158, and Lys159. A switch-II region spans residues 71–87 (GQERFRSITRSYYRNSV). S-geranylgeranyl cysteine attachment occurs at residues Cys215 and Cys217. Residue Cys217 is modified to Cysteine methyl ester.

It belongs to the small GTPase superfamily. Rab family. Interacts (GDP-bound) with C9orf72; C9orf72 acts as a GEF for RAB39A. Interacts (GTP-bound) with HOPS complex components VPS39 and VPS41, and STX17; interaction between HOPS components and RAB39A contributes to obtaining a functional HOPS complex that promotes membrane fusion driven by STX17-SNAP29-VAMP8. Interacts with BECN1. Probably associates with the PI3K (PI3KC3/PI3K-III/class III phosphatidylinositol 3-kinase) complex. Interacts with UACA. Interacts with isoform a of RASSF1. Does not interact with isoform c of RASSF1. Mg(2+) serves as cofactor. Prenylated. Prenylation is required for association with cellular membranes.

The protein localises to the cell membrane. It localises to the cytoplasmic vesicle. It is found in the phagosome membrane. The protein resides in the lysosome membrane. Its subcellular location is the autolysosome membrane. The catalysed reaction is GTP + H2O = GDP + phosphate + H(+). With respect to regulation, regulated by guanine nucleotide exchange factors (GEFs) including c9Orf72, which promote the exchange of bound GDP for free GTP. Regulated by GTPase activating proteins (GAPs) which increase the GTP hydrolysis activity. Inhibited by GDP dissociation inhibitors (GDIs). Functionally, the small GTPases Rab are key regulators of intracellular membrane trafficking, from the formation of transport vesicles to their fusion with membranes. Rabs cycle between an inactive GDP-bound form and an active GTP-bound form that is able to recruit to membranes different sets of downstream effectors directly responsible for vesicle formation, movement, tethering and fusion. RAB39A regulates autophagosome-lysosome fusion via recruitment of the HOPS endosomal tethering complex onto lysosomes; this process involves lysosomal RAB39A and autophagosomal RAB2A recruitment of HOPS subcomplexes VPS41-VPS16-VPS18-VPS33A and VPS39-VPS11, respectively, which assemble into a functional complex to mediate membrane tethering and SNAREs-driven membrane fusion. Also negatively regulates lipopolysaccharide (LPS)-induced autophagosome formation in macrophages, possibly by implicating PI3K. Promotes the delivery of MHC-I molecules from the ER to phagosomes and the generation of peptide-loaded MHC-I complexes in phagosomes, thus enhancing antigen cross-presentation by dendritic cells. Plays a role in the maturation and acidification of phagosomes that engulf pathogens, such as S.aureus and M.tuberculosis. Plays a role in the fusion of phagosomes with lysosomes. May be involved in multiple neurite formation. The polypeptide is Ras-related protein Rab-39A (Homo sapiens (Human)).